The primary structure comprises 298 residues: HTH-type transcriptional regulator ArgP (298 aa).

Residues 4–60 (VDYRWVAALDAVIAQRGFERAAEKLCITQSAVSQRIKQLEKLMAQPLLVREQPPRPT) enclose the HTH lysR-type domain. A DNA-binding region (H-T-H motif) is located at residues 21–40 (FERAAEKLCITQSAVSQRIK).

The protein belongs to the LysR transcriptional regulatory family. Homodimer.

Its function is as follows. Controls the transcription of genes involved in arginine and lysine metabolism. The chain is HTH-type transcriptional regulator ArgP from Photobacterium profundum (strain SS9).